We begin with the raw amino-acid sequence, 706 residues long: MSENHKLSYVRNIGIGAHIDAGKTTTTERILYYTGVSYSIGEVHDGTTVMDYMKQERDRGITIQSAATTCHWIKKDDCAEQASQKEQEYKINIIDTPGHVDFTIEVGRALRVLDGMIAVFDGVAGVEPQSETVWRQADKYAVPRICFVNKMDRMGADFFRCVQMMKDRLGTKPLVIQLPIGIEDTFKGVIDLVKMKAIVWSNEDLGAKYEYHSIPNNMQAMVEDYRHQLLETVVEVDEEIFNSYVSNEDLSEEDIRKCIRKGAISGLFVPVLCGSAFKNKGVQTLLDAVVDYLPSPNDVNSIKAVDVKTEQEISRKVSVDEQFSALAFKVINDPFVGSLTFIRIYSGKLQTGSTVINTTKNQKERISRMLLMHANNRKDIKEAVAGDIVALTGLKSTTTGDTICSLDSQIILEKIEFPKPVIELAVEPKTPADQEKISAALVKLAAEDPSLVFTVDSETNQMVIKGMGELHLEIIIDRMKEEFKVEANVGAPRVAYRETITQSYTVDYTHKKQTGGAGQFARVKIIFEPLEAGAGFQFESKIVGGAIPKEFIPGVEKGLEEIKESGVVAGYPTIDFKATLIDGSFHEVDSSVLAFEIAAKNAFKEGITKAGPKLLGPIMKVEVISPNEYMGDIIGDLNSRSGVIQSMEPRGNTQIINAYVPLGQMFGYVSTLRSLSQGRAQYSMVFSHYEQVSRSIAEKIQAKDKK.

The region spanning 8–297 is the tr-type G domain; sequence SYVRNIGIGA…AVVDYLPSPN (290 aa). GTP contacts are provided by residues 17 to 24, 95 to 99, and 149 to 152; these read AHIDAGKT, DTPGH, and NKMD.

It belongs to the TRAFAC class translation factor GTPase superfamily. Classic translation factor GTPase family. EF-G/EF-2 subfamily.

Its subcellular location is the cytoplasm. Its function is as follows. Catalyzes the GTP-dependent ribosomal translocation step during translation elongation. During this step, the ribosome changes from the pre-translocational (PRE) to the post-translocational (POST) state as the newly formed A-site-bound peptidyl-tRNA and P-site-bound deacylated tRNA move to the P and E sites, respectively. Catalyzes the coordinated movement of the two tRNA molecules, the mRNA and conformational changes in the ribosome. This Orientia tsutsugamushi (strain Ikeda) (Rickettsia tsutsugamushi) protein is Elongation factor G.